The following is a 418-amino-acid chain: Voltage-gated ClC-type chloride channel ClcB (418 aa).

10 helical membrane passes run 5–25, 54–74, 146–166, 168–188, 222–242, 260–280, 291–311, 316–336, 352–372, and 380–400; these read LLIA…FRHA, LLTP…WQKF, LWIA…PLAG, LFIA…PVII, ALII…LTLM, LALG…VWGN, APPL…AVLA, GAPG…GMLY, LLLG…APIM, and MTGE…ASVI.

It belongs to the chloride channel (TC 2.A.49) family. ClcB subfamily.

It localises to the cell inner membrane. In terms of biological role, probably acts as an electrical shunt for an outwardly-directed proton pump that is linked to amino acid decarboxylation, as part of the extreme acid resistance (XAR) response. This Escherichia coli O9:H4 (strain HS) protein is Voltage-gated ClC-type chloride channel ClcB.